Here is an 86-residue protein sequence, read N- to C-terminus: Small ribosomal subunit protein bS16 (86 aa).

It belongs to the bacterial ribosomal protein bS16 family.

This is Small ribosomal subunit protein bS16 from Bordetella bronchiseptica (strain ATCC BAA-588 / NCTC 13252 / RB50) (Alcaligenes bronchisepticus).